Here is a 461-residue protein sequence, read N- to C-terminus: Serine carboxypeptidase-like 51 (461 aa).

The signal sequence occupies residues 1-20; that stretch reads MKTTVVYLVILCLIVSCTNG. N-linked (GlcNAc...) asparagine glycans are attached at residues asparagine 99 and asparagine 152. Serine 166 is a catalytic residue. The N-linked (GlcNAc...) asparagine glycan is linked to asparagine 340. Active-site residues include aspartate 379 and histidine 438.

This sequence belongs to the peptidase S10 family. In terms of tissue distribution, expressed in seedlings, roots, flowers and siliques.

Its subcellular location is the secreted. Functionally, probable carboxypeptidase. This chain is Serine carboxypeptidase-like 51 (SCPL51), found in Arabidopsis thaliana (Mouse-ear cress).